Here is a 387-residue protein sequence, read N- to C-terminus: S-adenosylmethionine synthase (387 aa).

Histidine 16 is a binding site for ATP. Residue aspartate 18 coordinates Mg(2+). Glutamate 44 is a binding site for K(+). L-methionine is bound by residues glutamate 57 and glutamine 100. The tract at residues 100–110 is flexible loop; the sequence is QSPDIAQGVDR. Residues 167–169, 232–233, aspartate 241, 247–248, alanine 264, and lysine 268 each bind ATP; these read DAK, RF, and RK. Residue aspartate 241 coordinates L-methionine. L-methionine is bound at residue lysine 272.

It belongs to the AdoMet synthase family. Homotetramer; dimer of dimers. Mg(2+) serves as cofactor. The cofactor is K(+).

It localises to the cytoplasm. The enzyme catalyses L-methionine + ATP + H2O = S-adenosyl-L-methionine + phosphate + diphosphate. The protein operates within amino-acid biosynthesis; S-adenosyl-L-methionine biosynthesis; S-adenosyl-L-methionine from L-methionine: step 1/1. Functionally, catalyzes the formation of S-adenosylmethionine (AdoMet) from methionine and ATP. The overall synthetic reaction is composed of two sequential steps, AdoMet formation and the subsequent tripolyphosphate hydrolysis which occurs prior to release of AdoMet from the enzyme. This Cupriavidus metallidurans (strain ATCC 43123 / DSM 2839 / NBRC 102507 / CH34) (Ralstonia metallidurans) protein is S-adenosylmethionine synthase.